We begin with the raw amino-acid sequence, 525 residues long: ATP synthase subunit alpha (525 aa).

172–179 (GDRQTGKT) lines the ATP pocket.

The protein belongs to the ATPase alpha/beta chains family. F-type ATPases have 2 components, CF(1) - the catalytic core - and CF(0) - the membrane proton channel. CF(1) has five subunits: alpha(3), beta(3), gamma(1), delta(1), epsilon(1). CF(0) has three main subunits: a(1), b(2) and c(9-12). The alpha and beta chains form an alternating ring which encloses part of the gamma chain. CF(1) is attached to CF(0) by a central stalk formed by the gamma and epsilon chains, while a peripheral stalk is formed by the delta and b chains.

It is found in the cell inner membrane. It catalyses the reaction ATP + H2O + 4 H(+)(in) = ADP + phosphate + 5 H(+)(out). Functionally, produces ATP from ADP in the presence of a proton gradient across the membrane. The alpha chain is a regulatory subunit. This Parabacteroides distasonis (strain ATCC 8503 / DSM 20701 / CIP 104284 / JCM 5825 / NCTC 11152) protein is ATP synthase subunit alpha.